Reading from the N-terminus, the 62-residue chain is Large ribosomal subunit protein uL29 (62 aa).

This sequence belongs to the universal ribosomal protein uL29 family.

The chain is Large ribosomal subunit protein uL29 from Geobacter metallireducens (strain ATCC 53774 / DSM 7210 / GS-15).